Here is a 61-residue protein sequence, read N- to C-terminus: Photosystem II reaction center protein K (61 aa).

The propeptide occupies 1 to 24; sequence MINIFSFICIYLHSALYSSSFFFG. A helical membrane pass occupies residues 40-60; that stretch reads MPVIPLFFFLLAFVWQAAVSF.

The protein belongs to the PsbK family. PSII is composed of 1 copy each of membrane proteins PsbA, PsbB, PsbC, PsbD, PsbE, PsbF, PsbH, PsbI, PsbJ, PsbK, PsbL, PsbM, PsbT, PsbX, PsbY, PsbZ, Psb30/Ycf12, at least 3 peripheral proteins of the oxygen-evolving complex and a large number of cofactors. It forms dimeric complexes.

It is found in the plastid. It localises to the chloroplast thylakoid membrane. Functionally, one of the components of the core complex of photosystem II (PSII). PSII is a light-driven water:plastoquinone oxidoreductase that uses light energy to abstract electrons from H(2)O, generating O(2) and a proton gradient subsequently used for ATP formation. It consists of a core antenna complex that captures photons, and an electron transfer chain that converts photonic excitation into a charge separation. This chain is Photosystem II reaction center protein K, found in Pelargonium hortorum (Common geranium).